Consider the following 244-residue polypeptide: Cell division protein ZapD (244 aa).

This sequence belongs to the ZapD family. In terms of assembly, interacts with FtsZ.

It localises to the cytoplasm. In terms of biological role, cell division factor that enhances FtsZ-ring assembly. Directly interacts with FtsZ and promotes bundling of FtsZ protofilaments, with a reduction in FtsZ GTPase activity. This Shewanella sp. (strain MR-7) protein is Cell division protein ZapD.